The primary structure comprises 82 residues: Fibroblast growth factor 8 (82 aa).

Asn-68 carries N-linked (GlcNAc...) asparagine glycosylation.

This sequence belongs to the heparin-binding growth factors family. Monomer. Homodimer. Interacts with FGFR1, FGFR2, FGFR3 and FGFR4. Affinity between fibroblast growth factors (FGFs) and their receptors is increased by heparan sulfate glycosaminoglycans that function as coreceptors.

It is found in the secreted. Functionally, plays an important role in the regulation of embryonic development, cell proliferation, cell differentiation and cell migration. Required for normal brain, eye, ear and limb development during embryogenesis. Required for normal development of the gonadotropin-releasing hormone (GnRH) neuronal system. Plays a role in neurite outgrowth in hippocampal cells. The sequence is that of Fibroblast growth factor 8 (FGF8) from Canis lupus familiaris (Dog).